A 512-amino-acid chain; its full sequence is NAD(P)H-quinone oxidoreductase subunit 2 B, chloroplastic (512 aa).

Transmembrane regions (helical) follow at residues 31–51, 57–77, 99–119, 124–144, 149–169, 183–203, 229–249, 261–281, 295–315, 323–343, 354–374, 395–415, 418–438, and 484–504; these read FIFP…IDLT, IPWL…ALLF, IFQF…VEYI, MAIT…MFLC, LITI…LSGY, YLLM…WLYG, ISIA…LAPF, PTPV…ALAT, WHLL…LIAI, MLAY…IVGD, YMLF…LFGL, ALSL…AGFF, LYLF…IGLL, and MIVC…IIAI.

Belongs to the complex I subunit 2 family. NDH is composed of at least 16 different subunits, 5 of which are encoded in the nucleus.

It localises to the plastid. Its subcellular location is the chloroplast thylakoid membrane. The catalysed reaction is a plastoquinone + NADH + (n+1) H(+)(in) = a plastoquinol + NAD(+) + n H(+)(out). It carries out the reaction a plastoquinone + NADPH + (n+1) H(+)(in) = a plastoquinol + NADP(+) + n H(+)(out). Functionally, NDH shuttles electrons from NAD(P)H:plastoquinone, via FMN and iron-sulfur (Fe-S) centers, to quinones in the photosynthetic chain and possibly in a chloroplast respiratory chain. The immediate electron acceptor for the enzyme in this species is believed to be plastoquinone. Couples the redox reaction to proton translocation, and thus conserves the redox energy in a proton gradient. This is NAD(P)H-quinone oxidoreductase subunit 2 B, chloroplastic from Arabidopsis thaliana (Mouse-ear cress).